The primary structure comprises 473 residues: Photosystem II CP43 reaction center protein (473 aa).

Residues 1–14 (MKTLYSLRRSYPVE) constitute a propeptide that is removed on maturation. Residue Thr-15 is modified to N-acetylthreonine. Residue Thr-15 is modified to Phosphothreonine. 5 helical membrane passes run 69 to 93 (LFEV…PHLA), 134 to 155 (LIGP…KDRN), 178 to 200 (KALY…RKIT), 255 to 275 (KPFA…LSYS), and 291 to 312 (WFNN…ASQA). Position 367 (Glu-367) interacts with [CaMn4O5] cluster. Residues 447-471 (RARAAAAGFEKGIDRDFEPVLSMTP) traverse the membrane as a helical segment.

The protein belongs to the PsbB/PsbC family. PsbC subfamily. As to quaternary structure, PSII is composed of 1 copy each of membrane proteins PsbA, PsbB, PsbC, PsbD, PsbE, PsbF, PsbH, PsbI, PsbJ, PsbK, PsbL, PsbM, PsbT, PsbX, PsbY, PsbZ, Psb30/Ycf12, at least 3 peripheral proteins of the oxygen-evolving complex and a large number of cofactors. It forms dimeric complexes. Binds multiple chlorophylls and provides some of the ligands for the Ca-4Mn-5O cluster of the oxygen-evolving complex. It may also provide a ligand for a Cl- that is required for oxygen evolution. PSII binds additional chlorophylls, carotenoids and specific lipids. serves as cofactor.

The protein resides in the plastid. Its subcellular location is the chloroplast thylakoid membrane. One of the components of the core complex of photosystem II (PSII). It binds chlorophyll and helps catalyze the primary light-induced photochemical processes of PSII. PSII is a light-driven water:plastoquinone oxidoreductase, using light energy to abstract electrons from H(2)O, generating O(2) and a proton gradient subsequently used for ATP formation. This chain is Photosystem II CP43 reaction center protein, found in Pinus koraiensis (Korean pine).